A 285-amino-acid chain; its full sequence is Nucleotide-binding protein Pnap_0906 (285 aa).

8-15 contacts ATP; sequence GMSGSGKS. 57–60 serves as a coordination point for GTP; it reads DVRS.

The protein belongs to the RapZ-like family.

In terms of biological role, displays ATPase and GTPase activities. This is Nucleotide-binding protein Pnap_0906 from Polaromonas naphthalenivorans (strain CJ2).